Consider the following 103-residue polypeptide: Protamine-2 (103 aa).

Residues 1–103 (MVRYRTRSLS…RTRRRRCRRY (103 aa)) are disordered. Residues Ser-8 and Ser-10 each carry the phosphoserine modification. Residues 8-17 (SLSERPHEVH) are compositionally biased toward basic and acidic residues. Positions 18–29 (GQQVHGQDQGHN) are enriched in low complexity. Phosphoserine is present on Ser-37. Basic and acidic residues predominate over residues 39–48 (EHVEVYERTH). The span at 49-103 (QGHSHHRRRRCSQRRLHRIHRRRHRSCRRRRRRSCRHRRRHRRGCRTRRRRCRRY) shows a compositional bias: basic residues.

Belongs to the protamine P2 family. As to quaternary structure, interacts with TDRP. Post-translationally, proteolytic processing into mature chains is required for histone eviction during spermatogenesis. Transition proteins (TNP1 and TNP2) are required for processing. As to expression, testis.

It localises to the nucleus. Its subcellular location is the chromosome. In terms of biological role, protamines substitute for histones in the chromatin of sperm during the haploid phase of spermatogenesis. They compact sperm DNA into a highly condensed, stable and inactive complex. This is Protamine-2 (PRM2) from Erythrocebus patas (Red guenon).